The primary structure comprises 390 residues: Queuine tRNA-ribosyltransferase (390 aa).

Asp-90 functions as the Proton acceptor in the catalytic mechanism. Substrate is bound by residues 90–94 (DSGGF), Asp-144, Gln-197, and Gly-224. The tract at residues 255–261 (GVGTPED) is RNA binding. The Nucleophile role is filled by Asp-274. Residues 279–283 (TRNAR) are RNA binding; important for wobble base 34 recognition. The Zn(2+) site is built by Cys-312, Cys-314, Cys-317, and His-354.

This sequence belongs to the queuine tRNA-ribosyltransferase family. As to quaternary structure, homodimer. Within each dimer, one monomer is responsible for RNA recognition and catalysis, while the other monomer binds to the replacement base PreQ1. It depends on Zn(2+) as a cofactor.

It carries out the reaction 7-aminomethyl-7-carbaguanine + guanosine(34) in tRNA = 7-aminomethyl-7-carbaguanosine(34) in tRNA + guanine. Its pathway is tRNA modification; tRNA-queuosine biosynthesis. Catalyzes the base-exchange of a guanine (G) residue with the queuine precursor 7-aminomethyl-7-deazaguanine (PreQ1) at position 34 (anticodon wobble position) in tRNAs with GU(N) anticodons (tRNA-Asp, -Asn, -His and -Tyr). Catalysis occurs through a double-displacement mechanism. The nucleophile active site attacks the C1' of nucleotide 34 to detach the guanine base from the RNA, forming a covalent enzyme-RNA intermediate. The proton acceptor active site deprotonates the incoming PreQ1, allowing a nucleophilic attack on the C1' of the ribose to form the product. After dissociation, two additional enzymatic reactions on the tRNA convert PreQ1 to queuine (Q), resulting in the hypermodified nucleoside queuosine (7-(((4,5-cis-dihydroxy-2-cyclopenten-1-yl)amino)methyl)-7-deazaguanosine). The protein is Queuine tRNA-ribosyltransferase of Leptothrix cholodnii (strain ATCC 51168 / LMG 8142 / SP-6) (Leptothrix discophora (strain SP-6)).